The primary structure comprises 283 residues: Zinc import ATP-binding protein ZnuC (283 aa).

Residues 13–228 (VEMRNAGVHR…PEYVRLFGAR (216 aa)) enclose the ABC transporter domain. 45 to 52 (GPNGSGKS) contributes to the ATP binding site. The tract at residues 264–283 (HHHDHARDGGQGGGGHGHAG) is disordered. A compositionally biased stretch (gly residues) spans 272-283 (GGQGGGGHGHAG).

It belongs to the ABC transporter superfamily. Zinc importer (TC 3.A.1.15.5) family. The complex is composed of two ATP-binding proteins (ZnuC), two transmembrane proteins (ZnuB) and a solute-binding protein (ZnuA).

The protein localises to the cell inner membrane. It carries out the reaction Zn(2+)(out) + ATP(in) + H2O(in) = Zn(2+)(in) + ADP(in) + phosphate(in) + H(+)(in). Functionally, part of the ABC transporter complex ZnuABC involved in zinc import. Responsible for energy coupling to the transport system. This is Zinc import ATP-binding protein ZnuC from Chelativorans sp. (strain BNC1).